Reading from the N-terminus, the 329-residue chain is Small ribosomal subunit protein RACK1 (329 aa).

WD repeat units lie at residues 19–59 (GHNG…ATSP), 68–107 (GHSH…STRL), 110–149 (GHTQ…KFTL), 154–193 (AHQD…CNHT), 196–235 (DHTG…PLYK), 237–275 (EARN…VLAE), and 295–328 (PKAP…KSSS).

It belongs to the WD repeat G protein beta family. Ribosomal protein RACK1 subfamily.

This is Small ribosomal subunit protein RACK1 (gpbB) from Dictyostelium discoideum (Social amoeba).